The sequence spans 427 residues: Imidazolonepropionase (427 aa).

Fe(3+) is bound by residues H96 and H98. The Zn(2+) site is built by H96 and H98. 4-imidazolone-5-propanoate is bound by residues R105, Y168, and H201. Position 168 (Y168) interacts with N-formimidoyl-L-glutamate. H265 contributes to the Fe(3+) binding site. H265 contributes to the Zn(2+) binding site. Q268 provides a ligand contact to 4-imidazolone-5-propanoate. A Fe(3+)-binding site is contributed by D340. Residue D340 participates in Zn(2+) binding. N-formimidoyl-L-glutamate-binding residues include N342 and G344. T345 contributes to the 4-imidazolone-5-propanoate binding site.

The protein belongs to the metallo-dependent hydrolases superfamily. HutI family. Zn(2+) serves as cofactor. Fe(3+) is required as a cofactor.

The protein localises to the cytoplasm. It catalyses the reaction 4-imidazolone-5-propanoate + H2O = N-formimidoyl-L-glutamate. The protein operates within amino-acid degradation; L-histidine degradation into L-glutamate; N-formimidoyl-L-glutamate from L-histidine: step 3/3. In terms of biological role, catalyzes the hydrolytic cleavage of the carbon-nitrogen bond in imidazolone-5-propanoate to yield N-formimidoyl-L-glutamate. It is the third step in the universal histidine degradation pathway. The protein is Imidazolonepropionase of Psychrobacter cryohalolentis (strain ATCC BAA-1226 / DSM 17306 / VKM B-2378 / K5).